Consider the following 713-residue polypeptide: Acetyl-coenzyme A synthetase 1 (713 aa).

Residues 1-39 (MSPSAVQSSKLEEQSSEIDKLKAKMSQSAATAQQKKEHE) are disordered. Residues 10–22 (KLEEQSSEIDKLK) are compositionally biased toward basic and acidic residues. Residues 248–251 (RGGK) and threonine 367 each bind CoA. ATP contacts are provided by residues 443–445 (GEP), 467–472 (DTYWQT), aspartate 559, and arginine 574. The FACS motif lies at 552-600 (PGYYFTGDGAAKDKDGYIWILGRVDDVVNVSGHRLSTAEIEAAIIEDPI). Serine 582 provides a ligand contact to CoA. ATP is bound at residue arginine 585. Position 650 (arginine 650) interacts with CoA. The short motif at 711-713 (VKL) is the Microbody targeting signal element.

This sequence belongs to the ATP-dependent AMP-binding enzyme family.

Its subcellular location is the microsome. It is found in the cytoplasm. The protein localises to the mitochondrion. It localises to the nucleus. The enzyme catalyses acetate + ATP + CoA = acetyl-CoA + AMP + diphosphate. Catalyzes the production of acetyl-CoA. Provides the acetyl-CoA source for histone acetylation in the nucleus. 'Aerobic' isozyme of acetyl-coenzyme A synthetase, which supports growth on nonfermentable carbon sources such as glycerol and ethanol. May be required for assimilation of ethanol and acetate. This Saccharomyces cerevisiae (strain ATCC 204508 / S288c) (Baker's yeast) protein is Acetyl-coenzyme A synthetase 1 (ACS1).